The primary structure comprises 386 residues: Synaptotagmin-5 (386 aa).

Residues 1–16 show a composition bias toward pro residues; it reads MFPEPPTPGPPSPDTP. Residues 1-23 are disordered; that stretch reads MFPEPPTPGPPSPDTPPDSSRIS. Residues 1–24 lie on the Vesicular side of the membrane; it reads MFPEPPTPGPPSPDTPPDSSRISH. The chain crosses the membrane as a helical span at residues 25 to 45; that stretch reads GPVPPWALATIVLVSGLLIFS. At 46–386 the chain is on the cytoplasmic side; it reads CCFCLYRKSC…PDRVRLLPAP (341 aa). C2 domains are found at residues 108–227 and 239–372; these read ELGR…QAWR and KLGD…AQWH. The Ca(2+) site is built by Leu-138, Asp-139, Asp-145, Asp-197, Phe-198, Asp-199, Ser-202, Asp-205, Asp-270, Asp-276, Asp-330, and Asp-332.

The protein belongs to the synaptotagmin family. As to quaternary structure, homodimer. Interacts with both alpha- and beta-tubulin. The cofactor is Ca(2+).

The protein localises to the cytoplasmic vesicle. The protein resides in the secretory vesicle. It localises to the synaptic vesicle membrane. It is found in the recycling endosome membrane. In terms of biological role, may be involved in Ca(2+)-dependent exocytosis of secretory vesicles through Ca(2+) and phospholipid binding to the C2 domain or may serve as Ca(2+) sensors in the process of vesicular trafficking and exocytosis. Regulates the Ca(2+)-dependent secretion of norepinephrine in PC12 cells. Required for export from the endocytic recycling compartment to the cell surface. In Homo sapiens (Human), this protein is Synaptotagmin-5 (SYT5).